Reading from the N-terminus, the 402-residue chain is MSKLSLSSLDKTHLEGKKVLVRVDFNVPLNEDGQITDDTRIRAAIPTIEYLVNHSAKVILAAHFGRPKGQVNEKMRLTPVAARLSELLGQSVALTNSCIGDEAVAKSNSLSNRDVLLLENVRFFGEEEKNDLEFAQKLASHADMYVNDAFGAAHRAHASTQGVTNYLSPSVAGFLLEKELKYLQGAVDSPNRPLAAIVGGSKVSSKIGVLDSLLDKCDKIMIGGGMIFTFYKARGLDVGKSLVEEDKLELAKDLEAKAKAKGVELLLPTDVVLANEFSPDAESKISQIDSISGNWMGLDIGPDSIKVFQNALAECKTIIWNGPMGVFEFDKFADGTNAIATTLADLSAFSEVCTIIGGGDSVAAVEKAGLAEKMSHISTGGGASLELLEGKILPGVAALNDA.

Substrate contacts are provided by residues D24 to N26, R40, H63 to R66, R122, and R155. ATP-binding positions include K206, G297, E328, and G358–S361.

Belongs to the phosphoglycerate kinase family. As to quaternary structure, monomer.

It localises to the cytoplasm. It catalyses the reaction (2R)-3-phosphoglycerate + ATP = (2R)-3-phospho-glyceroyl phosphate + ADP. The protein operates within carbohydrate degradation; glycolysis; pyruvate from D-glyceraldehyde 3-phosphate: step 2/5. The sequence is that of Phosphoglycerate kinase from Prochlorococcus marinus (strain MIT 9301).